The sequence spans 230 residues: Urease accessory protein UreF (230 aa).

Belongs to the UreF family. As to quaternary structure, ureD, UreF and UreG form a complex that acts as a GTP-hydrolysis-dependent molecular chaperone, activating the urease apoprotein by helping to assemble the nickel containing metallocenter of UreC. The UreE protein probably delivers the nickel.

The protein resides in the cytoplasm. In terms of biological role, required for maturation of urease via the functional incorporation of the urease nickel metallocenter. This is Urease accessory protein UreF from Cupriavidus necator (strain ATCC 17699 / DSM 428 / KCTC 22496 / NCIMB 10442 / H16 / Stanier 337) (Ralstonia eutropha).